Consider the following 331-residue polypeptide: Adenosine deaminase (331 aa).

Histidine 12 and histidine 14 together coordinate Zn(2+). Residues histidine 14, aspartate 16, and glycine 170 each coordinate substrate. Histidine 197 is a binding site for Zn(2+). Glutamate 200 (proton donor) is an active-site residue. Residue aspartate 278 coordinates Zn(2+).

Belongs to the metallo-dependent hydrolases superfamily. Adenosine and AMP deaminases family. Adenosine deaminase subfamily. Requires Zn(2+) as cofactor.

The enzyme catalyses adenosine + H2O + H(+) = inosine + NH4(+). The catalysed reaction is 2'-deoxyadenosine + H2O + H(+) = 2'-deoxyinosine + NH4(+). In terms of biological role, catalyzes the hydrolytic deamination of adenosine and 2-deoxyadenosine. The polypeptide is Adenosine deaminase (Clostridium botulinum (strain 657 / Type Ba4)).